Here is a 389-residue protein sequence, read N- to C-terminus: MLLILAQWLQDDFGFFRVFNYITFRAVMATVTALLIGLAAGPWVIRKLSELKMGQAVRTDGPLTHLVKSGTPTMGGVLILIGIFVSCMLWADLSNRFIWIVMIVTFGFGAVGWVDDYRKVVRKDPKGMASREKFFWQTLIGLFAAIYLAFSVSEINNLKVLELFFEWVKSGFALDLPAKTNLLLPFMKEVSYPLGMMGFIILSYLVIVGSSNAVNLTDGLDGLVIMPVILVGAALGAFAYVMGNAIYAKYLLFPYIPGAGELMIFCGAMGGAGLAFLWYNTHPAQVFMGDVGALALGGALGTIAVIVRQEIVLFVMGGIFVAETVSVMMQVVWFKITKKHFGEGRRIFRMAPLHHHFELGGWKETQVVVRFWIITILLVLIGLSSLKLR.

Helical transmembrane passes span 25-45, 73-93, 97-117, 135-155, 190-210, 222-242, 258-278, 286-306, 311-331, and 366-386; these read RAVMATVTALLIGLAAGPWVI, TMGGVLILIGIFVSCMLWADL, FIWIVMIVTFGFGAVGWVDDY, FWQTLIGLFAAIYLAFSVSEI, VSYPLGMMGFIILSYLVIVGS, GLVIMPVILVGAALGAFAYVM, GAGELMIFCGAMGGAGLAFLW, VFMGDVGALALGGALGTIAVI, IVLFVMGGIFVAETVSVMMQV, and QVVVRFWIITILLVLIGLSSL.

It belongs to the glycosyltransferase 4 family. MraY subfamily. Mg(2+) is required as a cofactor.

It localises to the cell inner membrane. The enzyme catalyses UDP-N-acetyl-alpha-D-muramoyl-L-alanyl-gamma-D-glutamyl-meso-2,6-diaminopimeloyl-D-alanyl-D-alanine + di-trans,octa-cis-undecaprenyl phosphate = di-trans,octa-cis-undecaprenyl diphospho-N-acetyl-alpha-D-muramoyl-L-alanyl-D-glutamyl-meso-2,6-diaminopimeloyl-D-alanyl-D-alanine + UMP. It functions in the pathway cell wall biogenesis; peptidoglycan biosynthesis. Its function is as follows. Catalyzes the initial step of the lipid cycle reactions in the biosynthesis of the cell wall peptidoglycan: transfers peptidoglycan precursor phospho-MurNAc-pentapeptide from UDP-MurNAc-pentapeptide onto the lipid carrier undecaprenyl phosphate, yielding undecaprenyl-pyrophosphoryl-MurNAc-pentapeptide, known as lipid I. The chain is Phospho-N-acetylmuramoyl-pentapeptide-transferase from Polynucleobacter asymbioticus (strain DSM 18221 / CIP 109841 / QLW-P1DMWA-1) (Polynucleobacter necessarius subsp. asymbioticus).